The primary structure comprises 270 residues: ATP synthase subunit a (270 aa).

Helical transmembrane passes span 37-57 (NVHI…LWVF), 98-118 (VAPL…MDLI), 143-163 (DVNI…YYSI), 217-237 (VVFI…GALP), and 239-259 (AIFH…LTIV).

This sequence belongs to the ATPase A chain family. F-type ATPases have 2 components, CF(1) - the catalytic core - and CF(0) - the membrane proton channel. CF(1) has five subunits: alpha(3), beta(3), gamma(1), delta(1), epsilon(1). CF(0) has three main subunits: a(1), b(2) and c(9-12). The alpha and beta chains form an alternating ring which encloses part of the gamma chain. CF(1) is attached to CF(0) by a central stalk formed by the gamma and epsilon chains, while a peripheral stalk is formed by the delta and b chains.

It is found in the cell inner membrane. Key component of the proton channel; it plays a direct role in the translocation of protons across the membrane. This Aliivibrio salmonicida (strain LFI1238) (Vibrio salmonicida (strain LFI1238)) protein is ATP synthase subunit a.